Consider the following 502-residue polypeptide: Protein IWS1 homolog 1 (502 aa).

Over residues 1-12 the composition is skewed to basic and acidic residues; it reads MGFEDDPYRDVD. 2 disordered regions span residues 1–61 and 87–208; these read MGFE…DNDK and DEDV…DEDE. Composition is skewed to acidic residues over residues 13–22, 34–49, and 87–97; these read GEPIVDFDDF, QDFD…DWDG, and DEDVDDAEFDE. 2 stretches are compositionally biased toward basic and acidic residues: residues 138 to 151 and 181 to 194; these read NRGE…DEMW and PSER…DRSP. Tyrosine 185 bears the Phosphotyrosine mark. The region spanning 287–370 is the TFIIS N-terminal domain; it reads TLLKNWLEPL…DKWSRPIFNK (84 aa). Residues 385–434 form a disordered region; sequence VPYRRPPVKKPSNKATMESRDGDFDLEIRERKTGLTSGQSSRGDRQMTMR. The segment covering 401–417 has biased composition (basic and acidic residues); sequence MESRDGDFDLEIRERKT.

The protein belongs to the IWS1 family. In terms of assembly, interacts with BZR2/BES1 and SPT6 (via N-terminus). Interacts with ASHH2/SDG8.

It localises to the nucleus. Transcription factor involved in RNA polymerase II (RNAPII) transcription regulation. Involved in transcription elongation. May function at post-recruitment and elongation steps of transcription. May be recruited by BZR2/BES1 to target genes and promote their expression during transcription elongation process. Required for brassinosteroid (BR)-induced gene expression. Required the for regulation of numerous nitrogen-responsive genes in roots. Acts in roots to repress NRT2.1 transcription in response to high nitrogen supply. This repression is associated with an IWS1-dependent increase of trimethylation on 'Lys-27' H3K27me3 at the NRT2.1 locus. The polypeptide is Protein IWS1 homolog 1 (Arabidopsis thaliana (Mouse-ear cress)).